A 249-amino-acid chain; its full sequence is MAKQVLTYIDAKEFAYIIDSISVLVEEANFLIRNDGLYLRALDVSRTAMVDLAIPKESFEEFPEVEELRFGLNFKELKKLLRRVKKGDKISMEFEEGRVRIKLIGKSVRSIVVPSIEVVGEELPTPKVVYTAMVKAASDVLATAVKDADAVADEVKFEASEEALIISASSDKGEVEVKLDKNSELVYEFDVKEPASARFSLEYLVDITSKTSKISDIVTIELATAKPIYLSFDIPAGGKISYFIAPRVE.

This sequence belongs to the PCNA family. In terms of assembly, homotrimer. The subunits circularize to form a toroid; DNA passes through its center. Replication factor C (RFC) is required to load the toroid on the DNA.

Its function is as follows. Sliding clamp subunit that acts as a moving platform for DNA processing. Responsible for tethering the catalytic subunit of DNA polymerase and other proteins to DNA during high-speed replication. The protein is DNA polymerase sliding clamp 1 of Pyrobaculum aerophilum (strain ATCC 51768 / DSM 7523 / JCM 9630 / CIP 104966 / NBRC 100827 / IM2).